Reading from the N-terminus, the 749-residue chain is Amyloid-beta A4 precursor protein-binding family A member 2 (749 aa).

Disordered regions lie at residues 1–94, 130–220, and 238–344; these read MAHR…PEEE, DTDE…GDLE, and SMTS…NIPE. Residue Ser11 is modified to Phosphoserine. The segment covering 70 to 80 has biased composition (polar residues); sequence GDSSSDYVNNT. Composition is skewed to acidic residues over residues 81–94 and 131–142; these read SEEE…PEEE and TDECQEAVEEWT. The interval 185 to 270 is STXBP1-binding; it reads HYCASKEGYQ…SVEACPPIKA (86 aa). A Phosphoserine modification is found at Ser208. Residues 238–247 are compositionally biased toward polar residues; sequence SMTSITSASE. The segment covering 305–315 has biased composition (basic and acidic residues); the sequence is RTPEERLKWPH. In terms of domain architecture, PID spans 368–555; sequence DGIIFAANYL…IINTQEMYND (188 aa). 2 consecutive PDZ domains span residues 568-654 and 659-734; these read ELQL…IVSC and TVLI…TMPA.

As to quaternary structure, part of a multimeric complex containing STXBP1 and syntaxin-1. Binds to the cytoplasmic domain of amyloid-beta protein, and to the nuclear factor NF-kappa-B/p65 via its PDZ domain. Interacts with the N-terminal domain of NECAB3. In terms of tissue distribution, brain.

Putative function in synaptic vesicle exocytosis by binding to STXBP1, an essential component of the synaptic vesicle exocytotic machinery. May modulate processing of the amyloid-beta precursor protein (APP) and hence formation of APP-beta. This is Amyloid-beta A4 precursor protein-binding family A member 2 (APBA2) from Homo sapiens (Human).